The primary structure comprises 276 residues: Small ribosomal subunit protein uS2 (276 aa).

Ser-2 carries the post-translational modification N-acetylserine.

It belongs to the universal ribosomal protein uS2 family. As to quaternary structure, component of the small ribosomal subunit. Mature ribosomes consist of a small (40S) and a large (60S) subunit. The 40S subunit contains about 33 different proteins and 1 molecule of RNA (18S). The 60S subunit contains about 49 different proteins and 3 molecules of RNA (28S, 5.8S and 5S). Interacts with rps-21.

The protein resides in the cytoplasm. Required for the assembly and/or stability of the 40S ribosomal subunit. Required for the processing of the 20S rRNA-precursor to mature 18S rRNA in a late step of the maturation of 40S ribosomal subunits. Involved in cold-warm shock-induced translocation of the RNA exosome components from the nucleolus to nucleoplasm. The protein is Small ribosomal subunit protein uS2 of Caenorhabditis elegans.